We begin with the raw amino-acid sequence, 298 residues long: Transcription factor RAX2 (298 aa).

HTH myb-type domains follow at residues 9–62 (KANV…LNYL) and 63–117 (RPNI…KKKL). DNA-binding regions (H-T-H motif) lie at residues 38–62 (WIALPHKAGLRRCGKSCRLRWLNYL) and 90–113 (WSVIAAHLQGRTDNDIKNYWNTKL).

Ubiquitous, with higher levels in roots, flowers, and shoot tips. Found in all cells of the shoot tips.

The protein localises to the nucleus. In terms of biological role, transcription activator. Positively regulates axillary meristems (AMs) formation and development, especially during inflorescence. The polypeptide is Transcription factor RAX2 (RAX2) (Arabidopsis thaliana (Mouse-ear cress)).